The chain runs to 190 residues: Segregation and condensation protein B (190 aa).

It belongs to the ScpB family. In terms of assembly, homodimer. Homodimerization may be required to stabilize the binding of ScpA to the Smc head domains. Component of a cohesin-like complex composed of ScpA, ScpB and the Smc homodimer, in which ScpA and ScpB bind to the head domain of Smc. The presence of the three proteins is required for the association of the complex with DNA.

It localises to the cytoplasm. Its function is as follows. Participates in chromosomal partition during cell division. May act via the formation of a condensin-like complex containing Smc and ScpA that pull DNA away from mid-cell into both cell halves. The polypeptide is Segregation and condensation protein B (Bacillus cereus (strain G9842)).